We begin with the raw amino-acid sequence, 321 residues long: Tetraacyldisaccharide 4'-kinase (321 aa).

An ATP-binding site is contributed by serine 54–threonine 61.

It belongs to the LpxK family.

It carries out the reaction a lipid A disaccharide + ATP = a lipid IVA + ADP + H(+). Its pathway is glycolipid biosynthesis; lipid IV(A) biosynthesis; lipid IV(A) from (3R)-3-hydroxytetradecanoyl-[acyl-carrier-protein] and UDP-N-acetyl-alpha-D-glucosamine: step 6/6. Functionally, transfers the gamma-phosphate of ATP to the 4'-position of a tetraacyldisaccharide 1-phosphate intermediate (termed DS-1-P) to form tetraacyldisaccharide 1,4'-bis-phosphate (lipid IVA). The chain is Tetraacyldisaccharide 4'-kinase from Rickettsia peacockii (strain Rustic).